The following is a 533-amino-acid chain: Early growth response protein 1 (533 aa).

Disordered stretches follow at residues 1–94 (MAAA…EQPY) and 161–237 (MTNP…PPPA). The segment covering 68-77 (SGGGGGGGSN) has biased composition (gly residues). A compositionally biased stretch (low complexity) spans 164-189 (PPTSSSSAPSPAASSSSSASQSPPLS). A Glycyl lysine isopeptide (Lys-Gly) (interchain with G-Cter in SUMO2) cross-link involves residue Lys303. Residues 316 to 336 (PSRMRKYPNRPSKTPPHERPY) form a disordered region. 3 C2H2-type zinc fingers span residues 336-360 (YACP…IRIH), 366-388 (FQCR…IRTH), and 394-416 (FACD…TKIH). A disordered region spans residues 407–478 (DERKRHTKIH…SSTYPSPAHS (72 aa)). Residues 411 to 421 (RHTKIHLRQKD) are compositionally biased toward basic residues. The segment covering 427–475 (SVVASPAASSLSSYPSPVATSYPSPATTSFPSPVPTSYSSPGSSTYPSP) has biased composition (low complexity).

This sequence belongs to the EGR C2H2-type zinc-finger protein family. In terms of assembly, interacts with SNAI1 and SP1 upon 12-O-tetradecanoylphorbol-13-acetate (TPA) induction. In terms of tissue distribution, detected in lung vasculature and in mononuclear phagocytes. Detected in liver (at protein level). Expressed in the liver in a circadian manner.

The protein localises to the nucleus. Its subcellular location is the cytoplasm. Functionally, transcriptional regulator. Recognizes and binds to the DNA sequence 5'-GCG(T/G)GGGCG-3'(EGR-site) in the promoter region of target genes. Binds double-stranded target DNA, irrespective of the cytosine methylation status. Regulates the transcription of numerous target genes, and thereby plays an important role in regulating the response to growth factors, DNA damage, and ischemia. Plays a role in the regulation of cell survival, proliferation and cell death. Activates expression of p53/TP53 and TGFB1, and thereby helps prevent tumor formation. Required for normal progress through mitosis and normal proliferation of hepatocytes after partial hepatectomy. Mediates responses to ischemia and hypoxia; regulates the expression of proteins such as IL1B and CXCL2 that are involved in inflammatory processes and development of tissue damage after ischemia. Regulates biosynthesis of luteinizing hormone (LHB) in the pituitary. Regulates the amplitude of the expression rhythms of clock genes: BMAL1, PER2 and NR1D1 in the liver via the activation of PER1 (clock repressor) transcription. Regulates the rhythmic expression of core-clock gene BMAL1 in the suprachiasmatic nucleus (SCN). The polypeptide is Early growth response protein 1 (Egr1) (Mus musculus (Mouse)).